The following is a 175-amino-acid chain: Nucleoside-triphosphatase THEP1 (175 aa).

ATP is bound by residues 8–15 (GSPGVGKS) and 99–106 (LVVIDEIG).

The protein belongs to the THEP1 NTPase family.

The enzyme catalyses a ribonucleoside 5'-triphosphate + H2O = a ribonucleoside 5'-diphosphate + phosphate + H(+). Functionally, has nucleotide phosphatase activity towards ATP, GTP, CTP, TTP and UTP. May hydrolyze nucleoside diphosphates with lower efficiency. In Methanosarcina acetivorans (strain ATCC 35395 / DSM 2834 / JCM 12185 / C2A), this protein is Nucleoside-triphosphatase THEP1.